We begin with the raw amino-acid sequence, 325 residues long: uncharacterized protein (325 aa).

Residues 10-30 (IVFVSLAALVLLVSVSVFIYH) form a helical membrane-spanning segment. The region spanning 94–166 (KIAVVDRAGY…EIKAIIAMDI (73 aa)) is the AB hydrolase-1 domain.

It localises to the cell membrane. This is an uncharacterized protein from Bacillus subtilis (strain 168).